Here is a 994-residue protein sequence, read N- to C-terminus: E3 ubiquitin-protein ligase Arkadia (994 aa).

Glycyl lysine isopeptide (Lys-Gly) (interchain with G-Cter in SUMO2) cross-links involve residues Lys19, Lys28, Lys34, Lys47, Lys59, Lys73, Lys87, Lys96, and Lys110. The span at 66–89 shows a compositional bias: basic and acidic residues; that stretch reads HLCDDSQKQEKEMNGNQQEQEKSL. A disordered region spans residues 66 to 106; sequence HLCDDSQKQEKEMNGNQQEQEKSLVVRKKRKSQQAGPSYVQ. Residues 120–191 form a disordered region; sequence QHLGTPSDED…HKWPRTETES (72 aa). The segment covering 132–151 has biased composition (low complexity); the sequence is SSFSDCLSSPSSSLHFGDSD. Over residues 164-173 the composition is skewed to polar residues; the sequence is RHSQTILNAK. Lys173 is covalently cross-linked (Glycyl lysine isopeptide (Lys-Gly) (interchain with G-Cter in SUMO2)). Positions 174–184 are enriched in basic residues; it reads SRSHSARSHKW. Residues Lys198 and Lys218 each participate in a glycyl lysine isopeptide (Lys-Gly) (interchain with G-Cter in SUMO2) cross-link. The disordered stretch occupies residues 212 to 277; it reads CRKRFVKNNS…SSSTEGEEDL (66 aa). Residues 234–247 are compositionally biased toward basic residues; sequence MQRKKREVLARRKY. Positions 241–404 are interaction with AXIN1; sequence VLARRKYALL…VPTTSARMES (164 aa). Positions 252-271 are enriched in low complexity; the sequence is SSSSSSENDLSSESSSSSST. Positions 300 to 304 match the SUMO interaction motif 1 (SIM) motif; that stretch reads VVVIE. The short motif at 325-331 is the SUMO interaction motif 2 (SIM) element; it reads EVEIVTV. The interval 337–371 is disordered; that stretch reads SRSTLGHSRSHWSQGSSSHASRPQEPRNRSRISTV. Over residues 347 to 357 the composition is skewed to low complexity; the sequence is HWSQGSSSHAS. The SUMO interaction motif 3 (SIM) signature appears at 382-386; sequence VVDLT. Disordered regions lie at residues 388-476, 508-537, 610-684, and 696-742; these read DEDE…AMPR, HGHH…DPAC, APSQ…VDYV, and ISSH…APPA. A compositionally biased stretch (polar residues) spans 395–467; sequence VPTTSARMES…SRRTTSSAVT (73 aa). Basic residues predominate over residues 508 to 522; that stretch reads HGHHFQHHHHHHHTP. Residues 670–680 show a composition bias toward pro residues; it reads NPPPQTQPPPQ. The segment at 907-909 is ubiquitin binding; the sequence is YPH. Residues Lys923 and Lys927 each participate in a glycyl lysine isopeptide (Lys-Gly) (interchain with G-Cter in SUMO2) cross-link. 2 residues coordinate Zn(2+): Cys942 and Cys945. An RING-type; atypical zinc finger spans residues 942–983; that stretch reads CTICLSILEEGEDVRRLPCMHLFHQVCVDQWLITNKKCPICR. The segment at 957–961 is ubiquitin binding; that stretch reads RLPCM. Residues His965 and Cys968 each contribute to the Zn(2+) site.

It belongs to the Arkadia family. As to quaternary structure, monomer. Interacts with SMAD6, SMAD7, AXIN1, AXIN2 and SKIL isoform SNON. Interacts with (phosphorylated) SMAD2 and SMAD3. Part of a complex containing RNF111, AXIN1 and SMAD7. Interacts (via SIM domains) with SUMO1 and SUMO2. Broadly expressed.

It is found in the nucleus. The protein resides in the cytoplasm. Its subcellular location is the PML body. The catalysed reaction is S-ubiquitinyl-[E2 ubiquitin-conjugating enzyme]-L-cysteine + [acceptor protein]-L-lysine = [E2 ubiquitin-conjugating enzyme]-L-cysteine + N(6)-ubiquitinyl-[acceptor protein]-L-lysine.. The protein operates within protein modification; protein ubiquitination. Its activity is regulated as follows. Binds free ubiquitin non-covalently via its RING-type zinc finger. Ubiquitin-binding leads to enhance the E3 ubiquitin-protein ligase activity by stabilizing the ubiquitin-conjugating enzyme E2 (donor ubiquitin) in the 'closed' conformation and activating ubiquitin transfer. In terms of biological role, E3 ubiquitin-protein ligase. Required for mesoderm patterning during embryonic development. Acts as an enhancer of the transcriptional responses of the SMAD2/SMAD3 effectors, which are activated downstream of BMP. Acts by mediating ubiquitination and degradation of SMAD inhibitors such as SMAD7, inducing their proteasomal degradation and thereby enhancing the transcriptional activity of TGF-beta and BMP. In addition to enhance transcription of SMAD2/SMAD3 effectors, also regulates their turnover by mediating their ubiquitination and subsequent degradation, coupling their activation with degradation, thereby ensuring that only effectors 'in use' are degraded. Activates SMAD3/SMAD4-dependent transcription by triggering signal-induced degradation of SNON isoform of SKIL. Associates with UBE2D2 as an E2 enzyme. Specifically binds polysumoylated chains via SUMO interaction motifs (SIMs) and mediates ubiquitination of sumoylated substrates. Catalyzes 'Lys-63'-linked ubiquitination of sumoylated XPC in response to UV irradiation, promoting nucleotide excision repair. Mediates ubiquitination and degradation of sumoylated PML. The regulation of the BMP-SMAD signaling is however independent of sumoylation and is not dependent of SUMO interaction motifs (SIMs). The chain is E3 ubiquitin-protein ligase Arkadia from Homo sapiens (Human).